Here is a 488-residue protein sequence, read N- to C-terminus: Probable phenylalanine--tRNA ligase alpha subunit (488 aa).

The tract at residues 1 to 146 (MSIEQDILNL…KRKLVDINKK (146 aa)) is contains the major tRNA-Phe binding sites. Residues T315, 363–365 (QVE), and Y403 each bind L-phenylalanine. E405 is a Mg(2+) binding site. F429 is an L-phenylalanine binding site.

Belongs to the class-II aminoacyl-tRNA synthetase family. Phe-tRNA synthetase alpha subunit type 2 subfamily. As to quaternary structure, tetramer of two alpha and two beta subunits. It depends on Mg(2+) as a cofactor.

It localises to the cytoplasm. The catalysed reaction is tRNA(Phe) + L-phenylalanine + ATP = L-phenylalanyl-tRNA(Phe) + AMP + diphosphate + H(+). This chain is Probable phenylalanine--tRNA ligase alpha subunit, found in Enterocytozoon bieneusi (strain H348) (Microsporidian parasite).